Here is a 529-residue protein sequence, read N- to C-terminus: MTQTAEKPFGKLRSFLWPIHMHELKKVLPMFLMFFCISFNYTILRDTKDTLIVTAPGSGAEAIPFIKLWLVVPSAVVFMLIYAKLSNILSKQALFYAVLSPFVVFFALFPLVIYPYRHILHPTDFADTLQAILPSGFLGFIAMLRNWTFAAFYVLSELWGSVMLSLMFWGFANEITKISEAKRFYALFGVGANVALLISGPAIVWSSKLRASLGEGVDPWGVTLYFLMAMFLCSCAIIAACYWWMNRYVLTDPRFYNPAELKAKKSKPKMSMGESFSYLLRSPYMLLLALLVICYGVCINLVEVTWKSQLKMQFPNPNEYSAFMGTFSFWTGVVSVFVMLFIGGNVIRRFGWLTGALVTPVMVLVTGAIFFALVIFRDHATGLVAALGTTPLMLAVVVGAVQNILSKSTKYALFDATKEMAYIPLDQEQKVKGKAAIDVVAARFGKSGGSLIQQGLLVVCGSISAMTPFLAVALFAIIMVWLTSATKLNKLFLAASAAKEQELAEATAAAEKEASPAAKEVSPAIEGVS.

12 helical membrane-spanning segments follow: residues 24 to 44 (LKKV…YTIL), 63 to 83 (IPFI…LIYA), 93 to 113 (ALFY…PLVI), 124 to 144 (DFAD…IAML), 149 to 169 (FAAF…LMFW), 184 to 204 (FYAL…PAIV), 220 to 240 (WGVT…IIAA), 284 to 304 (YMLL…LVEV), 322 to 342 (AFMG…MLFI), 356 to 376 (ALVT…LVIF), 381 to 401 (TGLV…VGAV), and 463 to 483 (ISAM…VWLT). Residues 509-520 (AAEKEASPAAKE) are compositionally biased toward low complexity. Residues 509-529 (AAEKEASPAAKEVSPAIEGVS) form a disordered region.

This sequence belongs to the ADP/ATP translocase tlc family.

It is found in the cell membrane. This chain is ADP,ATP carrier protein 1 (tlcA), found in Chlamydia muridarum (strain MoPn / Nigg).